The primary structure comprises 169 residues: Probable chorismate pyruvate-lyase (169 aa).

3 residues coordinate substrate: Arg71, Ile110, and Glu150.

This sequence belongs to the UbiC family.

The protein resides in the cytoplasm. The enzyme catalyses chorismate = 4-hydroxybenzoate + pyruvate. It functions in the pathway cofactor biosynthesis; ubiquinone biosynthesis. Its function is as follows. Removes the pyruvyl group from chorismate, with concomitant aromatization of the ring, to provide 4-hydroxybenzoate (4HB) for the ubiquinone pathway. In Acinetobacter baumannii (strain ATCC 17978 / DSM 105126 / CIP 53.77 / LMG 1025 / NCDC KC755 / 5377), this protein is Probable chorismate pyruvate-lyase.